A 388-amino-acid polypeptide reads, in one-letter code: S-adenosylmethionine synthase (388 aa).

His16 lines the ATP pocket. Residue Asp18 participates in Mg(2+) binding. Glu44 is a binding site for K(+). Residues Glu57 and Gln100 each contribute to the L-methionine site. The interval 100–110 (QSPDIAQGVDK) is flexible loop. ATP-binding positions include 167–169 (DAK), 233–234 (RF), Asp242, 248–249 (RK), Ala265, and Lys269. Asp242 lines the L-methionine pocket. Position 273 (Lys273) interacts with L-methionine.

Belongs to the AdoMet synthase family. In terms of assembly, homotetramer; dimer of dimers. Requires Mg(2+) as cofactor. K(+) is required as a cofactor.

It is found in the cytoplasm. The catalysed reaction is L-methionine + ATP + H2O = S-adenosyl-L-methionine + phosphate + diphosphate. It participates in amino-acid biosynthesis; S-adenosyl-L-methionine biosynthesis; S-adenosyl-L-methionine from L-methionine: step 1/1. Its function is as follows. Catalyzes the formation of S-adenosylmethionine (AdoMet) from methionine and ATP. The overall synthetic reaction is composed of two sequential steps, AdoMet formation and the subsequent tripolyphosphate hydrolysis which occurs prior to release of AdoMet from the enzyme. The chain is S-adenosylmethionine synthase from Polynucleobacter asymbioticus (strain DSM 18221 / CIP 109841 / QLW-P1DMWA-1) (Polynucleobacter necessarius subsp. asymbioticus).